We begin with the raw amino-acid sequence, 72 residues long: Translation initiation factor IF-1 (72 aa).

Positions 1-72 (MAKEDNIEMQ…TKGRIVFRAR (72 aa)) constitute an S1-like domain.

Belongs to the IF-1 family. Component of the 30S ribosomal translation pre-initiation complex which assembles on the 30S ribosome in the order IF-2 and IF-3, IF-1 and N-formylmethionyl-tRNA(fMet); mRNA recruitment can occur at any time during PIC assembly.

It is found in the cytoplasm. Its function is as follows. One of the essential components for the initiation of protein synthesis. Stabilizes the binding of IF-2 and IF-3 on the 30S subunit to which N-formylmethionyl-tRNA(fMet) subsequently binds. Helps modulate mRNA selection, yielding the 30S pre-initiation complex (PIC). Upon addition of the 50S ribosomal subunit IF-1, IF-2 and IF-3 are released leaving the mature 70S translation initiation complex. In Shewanella baltica (strain OS155 / ATCC BAA-1091), this protein is Translation initiation factor IF-1.